The sequence spans 194 residues: FMN-dependent NADH:quinone oxidoreductase (194 aa).

FMN-binding positions include Ser-10 and 90 to 93; that span reads MYNL.

It belongs to the azoreductase type 1 family. In terms of assembly, homodimer. It depends on FMN as a cofactor.

It carries out the reaction 2 a quinone + NADH + H(+) = 2 a 1,4-benzosemiquinone + NAD(+). It catalyses the reaction N,N-dimethyl-1,4-phenylenediamine + anthranilate + 2 NAD(+) = 2-(4-dimethylaminophenyl)diazenylbenzoate + 2 NADH + 2 H(+). Quinone reductase that provides resistance to thiol-specific stress caused by electrophilic quinones. Functionally, also exhibits azoreductase activity. Catalyzes the reductive cleavage of the azo bond in aromatic azo compounds to the corresponding amines. This is FMN-dependent NADH:quinone oxidoreductase from Haemophilus influenzae (strain ATCC 51907 / DSM 11121 / KW20 / Rd).